A 297-amino-acid polypeptide reads, in one-letter code: Urease accessory protein UreD 2 (297 aa).

This sequence belongs to the UreD family. UreD, UreF and UreG form a complex that acts as a GTP-hydrolysis-dependent molecular chaperone, activating the urease apoprotein by helping to assemble the nickel containing metallocenter of UreC. The UreE protein probably delivers the nickel.

Its subcellular location is the cytoplasm. Required for maturation of urease via the functional incorporation of the urease nickel metallocenter. The polypeptide is Urease accessory protein UreD 2 (Methylorubrum populi (strain ATCC BAA-705 / NCIMB 13946 / BJ001) (Methylobacterium populi)).